Here is a 470-residue protein sequence, read N- to C-terminus: Ubiquitin carboxyl-terminal hydrolase calypso (470 aa).

The region spanning 11 to 241 (GWLELESDPG…ITHKLKMLRT (231 aa)) is the UCH catalytic domain. Cys-98 acts as the Nucleophile in catalysis. His-177 serves as the catalytic Proton donor. Positions 260 to 280 (ESRSQAEIRETVDKIKKEEQE) form a coiled coil. The ULD domain maps to 392–420 (NYDEFICTFLSMLAYQGELGDLVTQHLVT). The tract at residues 422 to 470 (RKPSLGGVQNSGSRGVVRNYNKKSTTNGSSPKTPSSKRRRGRTKYRKRK) is positively charged C-terminal tail required for binding nucleosomes. A compositionally biased stretch (polar residues) spans 423 to 434 (KPSLGGVQNSGS). The interval 423-470 (KPSLGGVQNSGSRGVVRNYNKKSTTNGSSPKTPSSKRRRGRTKYRKRK) is disordered. Over residues 456–470 (SSKRRRGRTKYRKRK) the composition is skewed to basic residues.

The protein belongs to the peptidase C12 family. BAP1 subfamily. As to quaternary structure, catalytic component of the polycomb repressive deubiquitinase (PR-DUB) complex, at least composed of caly/calypso, Asx and sba (MBD5/6 homolog). The PR-DUB complex associates with nucleosomes to mediate deubiquitination of histone H2AK118ub1 substrates; the association requires the positively charged C-terminal tail of caly, probably due to direct binding of DNA. Interacts (via ULD domain) with Asx (via DEUBAD domain); the interaction produces a stable heterodimer with a composite binding site for ubiquitin. Homodimerizes (via coiled-coil hinge-region between the UCH and ULD domains) to mediate assembly of 2 copies of the caly-Asx heterodimer into a bisymmetric tetramer; dimerization enhances PR-DUB association with nucleosomes.

It is found in the nucleus. The catalysed reaction is Thiol-dependent hydrolysis of ester, thioester, amide, peptide and isopeptide bonds formed by the C-terminal Gly of ubiquitin (a 76-residue protein attached to proteins as an intracellular targeting signal).. Functionally, catalytic component of the polycomb repressive deubiquitinase (PR-DUB) complex, a complex that specifically mediates deubiquitination of histone H2A monoubiquitinated at 'Lys-119' (H2AK118ub1). Mediates bisymmetric organization of the PR-DUB complex and is involved in association with nucleosomes to mediate deubiquitination. Does not deubiquitinate monoubiquitinated histone H2B. Required to maintain the transcriptionally repressive state of homeotic genes throughout development. The PR-DUB complex has weak or no activity toward 'Lys-48'- and 'Lys-63'-linked polyubiquitin chains. Polycomb group (PcG) protein. In Culex quinquefasciatus (Southern house mosquito), this protein is Ubiquitin carboxyl-terminal hydrolase calypso.